The primary structure comprises 491 residues: Probable glycine dehydrogenase (decarboxylating) subunit 2 (491 aa).

Lysine 274 carries the N6-(pyridoxal phosphate)lysine modification.

It belongs to the GcvP family. C-terminal subunit subfamily. The glycine cleavage system is composed of four proteins: P, T, L and H. In this organism, the P 'protein' is a heterodimer of two subunits. The cofactor is pyridoxal 5'-phosphate.

The enzyme catalyses N(6)-[(R)-lipoyl]-L-lysyl-[glycine-cleavage complex H protein] + glycine + H(+) = N(6)-[(R)-S(8)-aminomethyldihydrolipoyl]-L-lysyl-[glycine-cleavage complex H protein] + CO2. The glycine cleavage system catalyzes the degradation of glycine. The P protein binds the alpha-amino group of glycine through its pyridoxal phosphate cofactor; CO(2) is released and the remaining methylamine moiety is then transferred to the lipoamide cofactor of the H protein. This chain is Probable glycine dehydrogenase (decarboxylating) subunit 2, found in Shouchella clausii (strain KSM-K16) (Alkalihalobacillus clausii).